A 420-amino-acid polypeptide reads, in one-letter code: F420-non-reducing hydrogenase vhu subunit A (420 aa).

Ni(2+) contacts are provided by cysteine 61 and cysteine 64.

The protein belongs to the [NiFe]/[NiFeSe] hydrogenase large subunit family. The F420-non-reducing hydrogenase vhu is composed of four subunits; VhuA, VhuD, VhuG and VhuU. It depends on Ni(2+) as a cofactor.

In Methanococcus voltae, this protein is F420-non-reducing hydrogenase vhu subunit A (vhuA).